The primary structure comprises 421 residues: D-inositol 3-phosphate glycosyltransferase (421 aa).

H13 serves as a coordination point for 1D-myo-inositol 3-phosphate. UDP-N-acetyl-alpha-D-glucosamine contacts are provided by residues 19–20 and G27; that span reads QP. 1D-myo-inositol 3-phosphate is bound by residues 24 to 29, K82, Y115, T139, and R159; that span reads DAGGMN. R233, K238, and V294 together coordinate UDP-N-acetyl-alpha-D-glucosamine. Mg(2+) contacts are provided by F303, R304, and A306. UDP-N-acetyl-alpha-D-glucosamine is bound by residues E316 and E324. T330 contacts Mg(2+).

It belongs to the glycosyltransferase group 1 family. MshA subfamily. Homodimer.

The enzyme catalyses 1D-myo-inositol 3-phosphate + UDP-N-acetyl-alpha-D-glucosamine = 1D-myo-inositol 2-acetamido-2-deoxy-alpha-D-glucopyranoside 3-phosphate + UDP + H(+). In terms of biological role, catalyzes the transfer of a N-acetyl-glucosamine moiety to 1D-myo-inositol 3-phosphate to produce 1D-myo-inositol 2-acetamido-2-deoxy-glucopyranoside 3-phosphate in the mycothiol biosynthesis pathway. The polypeptide is D-inositol 3-phosphate glycosyltransferase (Arthrobacter sp. (strain FB24)).